Reading from the N-terminus, the 243-residue chain is Zinc import ATP-binding protein ZnuC (243 aa).

The ABC transporter domain maps to 25–242; sequence LVVDSITLFY…AKFMSVFPEN (218 aa). 57 to 64 contributes to the ATP binding site; it reads GPNGGGKT.

The protein belongs to the ABC transporter superfamily. Zinc importer (TC 3.A.1.15.5) family. The complex is composed of two ATP-binding proteins (ZnuC), two transmembrane proteins (ZnuB) and a solute-binding protein (ZnuA).

The protein resides in the cell inner membrane. The enzyme catalyses Zn(2+)(out) + ATP(in) + H2O(in) = Zn(2+)(in) + ADP(in) + phosphate(in) + H(+)(in). Its function is as follows. Part of the ABC transporter complex ZnuABC involved in zinc import. Responsible for energy coupling to the transport system. This Anaplasma phagocytophilum (strain HZ) protein is Zinc import ATP-binding protein ZnuC.